The following is a 118-amino-acid chain: NLVQFSYLIQCANTGKRASYHYADYGCYCGAGGSGTPVDELDRCCKIHDNCYGQAEKMGCYPKLTMYNYYCGTQSPTCDNKTGCQRYVCACDLEAAKCFARSPYNNKNYNIDTSKRCK.

7 disulfide bridges follow: Cys11-Cys71, Cys27-Cys117, Cys29-Cys45, Cys44-Cys98, Cys51-Cys91, Cys60-Cys84, and Cys78-Cys89. Ca(2+) contacts are provided by Tyr28, Gly30, and Gly32. His48 is a catalytic residue. Asp49 lines the Ca(2+) pocket. The active site involves Asp92.

The protein belongs to the phospholipase A2 family. Group I subfamily. D49 sub-subfamily. In terms of assembly, monomer. The cofactor is Ca(2+). As to expression, expressed by the venom gland.

The protein localises to the secreted. The enzyme catalyses a 1,2-diacyl-sn-glycero-3-phosphocholine + H2O = a 1-acyl-sn-glycero-3-phosphocholine + a fatty acid + H(+). Functionally, PLA2 catalyzes the calcium-dependent hydrolysis of the 2-acyl groups in 3-sn-phosphoglycerides. This is Basic phospholipase A2 4 from Laticauda semifasciata (Black-banded sea krait).